The following is a 114-amino-acid chain: Prostate stem cell antigen (114 aa).

Positions 1–11 (MAGLALQPGTA) are cleaved as a signal peptide. In terms of domain architecture, UPAR/Ly6 spans 12–86 (LLCYSCKAQV…CCDTDLCNAS (75 aa)). Intrachain disulfides connect Cys14-Cys39, Cys17-Cys26, Cys32-Cys57, Cys61-Cys77, and Cys78-Cys83. An N-linked (GlcNAc...) asparagine glycan is attached at Asn31. Ser86 carries GPI-anchor amidated serine lipidation. Positions 86-114 (SGAHALQPAAAILALLPALGLLLWGPGQL) are cleaved as a propeptide — removed in mature form.

Interacts with CHRNA4. N-glycosylated. In terms of tissue distribution, highly expressed in prostate (basal, secretory and neuroendocrine epithelium cells). Also found in bladder (transitional epithelium), placenta (trophoblasts), stomach (neuroendocrine cells), colon (neuroendocrine cells) and kidney (collecting ducts). Overexpressed in prostate cancers and expression is correlated with tumor stage, grade and androgen-independence. Highly expressed in prostate cancer bone metastases. Expressed in gastric epithelial cells, mainly in the isthmus (at protein level). Not detected in normal intestinal epithelium (at protein level). Expressed in brain cortex; expression is significantly increased in the front cortex of Alzheimer disease patients.

The protein resides in the cell membrane. May be involved in the regulation of cell proliferation. Has a cell-proliferation inhibition activity in vitro. Functionally, may act as a modulator of nicotinic acetylcholine receptors (nAChRs) activity. In vitro inhibits nicotine-induced signaling probably implicating alpha-3:beta-2- or alpha-7-containing nAChRs. In Homo sapiens (Human), this protein is Prostate stem cell antigen (PSCA).